The chain runs to 2327 residues: Acetyl-CoA carboxylase 2 (2327 aa).

The interval 1-62 (MTSTHVATLG…NGGVSDSKKL (62 aa)) is disordered. The 508-residue stretch at 134-641 (PIHSVLVANN…HTGWLDTRIA (508 aa)) folds into the Biotin carboxylation domain. The ATP-grasp domain occupies 287-481 (ECCLDSIPDE…AAQVAVGMGI (195 aa)). 313-370 (CQVVGYPAMIKASWGGGGKGIRKVHNDDEVRTLFKQVQGEVPGSPIFIMRLAAQSRHL) is a binding site for ATP. Glu-436, Glu-450, and Asn-452 together coordinate Mg(2+). Residues Glu-436, Glu-450, and Asn-452 each contribute to the Mn(2+) site. Arg-454 is a catalytic residue. One can recognise a Biotinyl-binding domain in the interval 768–842 (LQNDHDPSKL…QAGDLIARLD (75 aa)). N6-biotinyllysine is present on Lys-809. Residues 1568 to 1909 (PYQPLSVIDL…YIGGPLPVTT (342 aa)) form the CoA carboxyltransferase N-terminal domain. The tract at residues 1568-2227 (PYQPLSVIDL…EDVLAKEIRA (660 aa)) is carboxyltransferase. Residues Arg-1818, Lys-2119, and Arg-2121 each coordinate CoA. In terms of domain architecture, CoA carboxyltransferase C-terminal spans 1913 to 2227 (PPDRPVAYIP…EDVLAKEIRA (315 aa)).

In terms of assembly, homodimer. Requires biotin as cofactor. It depends on Mg(2+) as a cofactor. The cofactor is Mn(2+).

It is found in the cytoplasm. The protein resides in the cytosol. The catalysed reaction is hydrogencarbonate + acetyl-CoA + ATP = malonyl-CoA + ADP + phosphate + H(+). The enzyme catalyses N(6)-biotinyl-L-lysyl-[protein] + hydrogencarbonate + ATP = N(6)-carboxybiotinyl-L-lysyl-[protein] + ADP + phosphate + H(+). It functions in the pathway lipid metabolism; malonyl-CoA biosynthesis; malonyl-CoA from acetyl-CoA: step 1/1. Multifunctional enzyme that catalyzes the carboxylation of acetyl-CoA, forming malonyl-CoA, which is used in the plastid for fatty acid synthesis and in the cytosol in various biosynthetic pathways including fatty acid elongation. This Oryza sativa subsp. japonica (Rice) protein is Acetyl-CoA carboxylase 2 (ACC2).